The primary structure comprises 356 residues: NADH-quinone oxidoreductase subunit H (356 aa).

8 helical membrane-spanning segments follow: residues 18–38 (IVMI…IAYI), 87–107 (GVFL…WAVI), 120–140 (VGIL…IMAG), 166–186 (IGFV…SAVV), 205–225 (ILNW…VSAL), 265–285 (AITT…LPPI), 292–312 (WVPG…LIAM), and 333–353 (FLPL…FAGI).

The protein belongs to the complex I subunit 1 family. NDH-1 is composed of 14 different subunits. Subunits NuoA, H, J, K, L, M, N constitute the membrane sector of the complex.

Its subcellular location is the cell inner membrane. It catalyses the reaction a quinone + NADH + 5 H(+)(in) = a quinol + NAD(+) + 4 H(+)(out). In terms of biological role, NDH-1 shuttles electrons from NADH, via FMN and iron-sulfur (Fe-S) centers, to quinones in the respiratory chain. The immediate electron acceptor for the enzyme in this species is believed to be ubiquinone. Couples the redox reaction to proton translocation (for every two electrons transferred, four hydrogen ions are translocated across the cytoplasmic membrane), and thus conserves the redox energy in a proton gradient. This subunit may bind ubiquinone. This Bradyrhizobium sp. (strain BTAi1 / ATCC BAA-1182) protein is NADH-quinone oxidoreductase subunit H.